The primary structure comprises 110 residues: CHH-like protein (110 aa).

Residues 1–23 (MHLSSVQFAWAALVALAVSAAGA) form the signal peptide. A propeptide spanning residues 24–35 (LPSSAPHHVERR) is cleaved from the precursor. 3 disulfide bridges follow: cysteine 42–cysteine 78, cysteine 58–cysteine 74, and cysteine 61–cysteine 87. Valine 107 bears the Valine amide mark.

It belongs to the arthropod CHH/MIH/GIH/VIH hormone family.

The protein localises to the secreted. In Bombyx mori (Silk moth), this protein is CHH-like protein (CHHL).